A 145-amino-acid chain; its full sequence is uncharacterized protein (145 aa).

4 helical membrane passes run 1–21, 28–48, 54–74, and 96–116; these read MELF…YFLI, TVLI…MGAL, SMTS…AYVM, and FFLI…IPSA.

This sequence belongs to the DcuC/DcuD transporter (TC 2.A.61) family.

Its subcellular location is the cell membrane. This is an uncharacterized protein from Haemophilus influenzae (strain ATCC 51907 / DSM 11121 / KW20 / Rd).